Consider the following 606-residue polypeptide: MRSNYCGALRNEHINSKVQLCGWVDRCRDHGGVIFIDLRDSSGTMQITVDPDQGTDLFNIAESLKNETVIQVTGKVRSRPEESINKKLETGQIEVLADVLKVLNPVYGNLPFAVSVHDDEPLKEEIRLKHRYLDLRRERMKKNLHLRHATIQTARNFLEEEGFIEVETPILTRSTPEGARDYLVPSRVCEGEWFALPQSPQIFKQLLMVGGIERYYQVARCFRDEDLRSDRQPEFTQLDMEMSFMSQEEILCLNERLIACIWKKIKGKDIKVPFPRLSWQESMDRYGTDRPDTRYGMELVDVSSIVKDIGFKVFSGAIQAGGSVKCIKVEEGNQSISNVRIKPGGDVFNEAQKAGAKGLAFIRVRVNNEIDTIGAIKDNLNNQQKNELLLKTKAKPGDLILFAAGDTEIVHKTLDKVRQFLAKELRLISTGKSKDQWNFLWVIDFPMFNFNKDEKRHEAMHHPFCAPNAKDIGGDPGLWEENLPKARAQAYDLVLNGLELGGGSLRIHNPELQQKVLETIGIAKDEATEQFGFLLNALEMGAPPHGGLAFGLDRIVMLLSEEDSIRDTIAFPKTQQARCLMAQAPNEVSKRQLKELHIASTWVDNE.

Residue Glu177 participates in L-aspartate binding. Positions 201–204 (QIFK) are aspartate. L-aspartate is bound at residue Arg223. Residues 223-225 (RDE) and Gln232 contribute to the ATP site. His461 provides a ligand contact to L-aspartate. Glu499 provides a ligand contact to ATP. Position 506 (Arg506) interacts with L-aspartate. 551–554 (GLDR) is an ATP binding site.

Belongs to the class-II aminoacyl-tRNA synthetase family. Type 1 subfamily. Homodimer.

The protein resides in the cytoplasm. The enzyme catalyses tRNA(Asx) + L-aspartate + ATP = L-aspartyl-tRNA(Asx) + AMP + diphosphate. Aspartyl-tRNA synthetase with relaxed tRNA specificity since it is able to aspartylate not only its cognate tRNA(Asp) but also tRNA(Asn). Reaction proceeds in two steps: L-aspartate is first activated by ATP to form Asp-AMP and then transferred to the acceptor end of tRNA(Asp/Asn). This chain is Aspartate--tRNA(Asp/Asn) ligase, found in Prochlorococcus marinus (strain MIT 9211).